A 127-amino-acid chain; its full sequence is Large ribosomal subunit protein bL17 (127 aa).

It belongs to the bacterial ribosomal protein bL17 family. Part of the 50S ribosomal subunit. Contacts protein L32.

This Mannheimia succiniciproducens (strain KCTC 0769BP / MBEL55E) protein is Large ribosomal subunit protein bL17.